A 463-amino-acid polypeptide reads, in one-letter code: Glutamate--tRNA ligase (463 aa).

The 'HIGH' region signature appears at 8 to 18 (PSPTGYLHIGG). The 'KMSKS' region motif lies at 236–240 (RLSKR). Residue Lys-239 coordinates ATP.

This sequence belongs to the class-I aminoacyl-tRNA synthetase family. Glutamate--tRNA ligase type 1 subfamily. Monomer.

It localises to the cytoplasm. It carries out the reaction tRNA(Glu) + L-glutamate + ATP = L-glutamyl-tRNA(Glu) + AMP + diphosphate. Functionally, catalyzes the attachment of glutamate to tRNA(Glu) in a two-step reaction: glutamate is first activated by ATP to form Glu-AMP and then transferred to the acceptor end of tRNA(Glu). The protein is Glutamate--tRNA ligase of Nitrosomonas europaea (strain ATCC 19718 / CIP 103999 / KCTC 2705 / NBRC 14298).